A 159-amino-acid chain; its full sequence is Aspartate carbamoyltransferase regulatory chain (159 aa).

Zn(2+) contacts are provided by C113, C118, C143, and C146.

The protein belongs to the PyrI family. As to quaternary structure, contains catalytic and regulatory chains. It depends on Zn(2+) as a cofactor.

Functionally, involved in allosteric regulation of aspartate carbamoyltransferase. This chain is Aspartate carbamoyltransferase regulatory chain, found in Methanococcoides burtonii (strain DSM 6242 / NBRC 107633 / OCM 468 / ACE-M).